The chain runs to 194 residues: Ribonuclease HII (194 aa).

Positions 3–193 constitute an RNase H type-2 domain; sequence ILTAGVDEAG…VRNLLAQQTL (191 aa). The a divalent metal cation site is built by aspartate 9, glutamate 10, and aspartate 101.

This sequence belongs to the RNase HII family. Requires Mn(2+) as cofactor. Mg(2+) serves as cofactor.

The protein resides in the cytoplasm. The catalysed reaction is Endonucleolytic cleavage to 5'-phosphomonoester.. Its function is as follows. Endonuclease that specifically degrades the RNA of RNA-DNA hybrids. This chain is Ribonuclease HII, found in Neisseria meningitidis serogroup C (strain 053442).